The following is a 487-amino-acid chain: Glutamyl-tRNA(Gln) amidotransferase subunit A (487 aa).

Catalysis depends on charge relay system residues lysine 78 and serine 153. Serine 177 serves as the catalytic Acyl-ester intermediate.

It belongs to the amidase family. GatA subfamily. As to quaternary structure, heterotrimer of A, B and C subunits.

The catalysed reaction is L-glutamyl-tRNA(Gln) + L-glutamine + ATP + H2O = L-glutaminyl-tRNA(Gln) + L-glutamate + ADP + phosphate + H(+). Functionally, allows the formation of correctly charged Gln-tRNA(Gln) through the transamidation of misacylated Glu-tRNA(Gln) in organisms which lack glutaminyl-tRNA synthetase. The reaction takes place in the presence of glutamine and ATP through an activated gamma-phospho-Glu-tRNA(Gln). The chain is Glutamyl-tRNA(Gln) amidotransferase subunit A from Oleidesulfovibrio alaskensis (strain ATCC BAA-1058 / DSM 17464 / G20) (Desulfovibrio alaskensis).